The chain runs to 91 residues: Mercuric transport protein periplasmic component (91 aa).

Positions 1-19 (MKKLFASLALAAVVAPVWA) are cleaved as a signal peptide. One can recognise an HMA domain in the interval 22–88 (QTVTLSVPGM…ATADAGYPSS (67 aa)). Residues cysteine 33 and cysteine 36 each contribute to the Hg(2+) site.

Belongs to the MerP family. Monomer.

Its subcellular location is the periplasm. Functionally, involved in mercury resistance. Acts as a mercury scavenger that specifically binds to a mercuric ion in the periplasm and probably passes it to the cytoplasmic mercuric reductase MerA via the mercuric transport protein MerT. The protein is Mercuric transport protein periplasmic component of Pseudomonas aeruginosa.